A 401-amino-acid chain; its full sequence is Phosphoglycerate kinase (401 aa).

Substrate-binding positions include 24–26 (DFN), Arg-40, 63–66 (HFGR), Arg-122, and Arg-155. Residues Lys-206, Gly-297, Glu-328, and 357–360 (GGDS) each bind ATP.

It belongs to the phosphoglycerate kinase family. In terms of assembly, monomer.

It is found in the cytoplasm. The catalysed reaction is (2R)-3-phosphoglycerate + ATP = (2R)-3-phospho-glyceroyl phosphate + ADP. The protein operates within carbohydrate degradation; glycolysis; pyruvate from D-glyceraldehyde 3-phosphate: step 2/5. The chain is Phosphoglycerate kinase from Prochlorococcus marinus (strain NATL2A).